The sequence spans 243 residues: Adenosylcobinamide-GDP ribazoletransferase (243 aa).

The next 5 membrane-spanning stretches (helical) occupy residues 31 to 51 (LLFYPLVGLLFGVILWALNIA), 57 to 77 (LLLHAALLLAVWVLLSGALHL), 109 to 129 (IAVVTLVLVLLLKFAALLALI), 135 to 155 (MALIIVPLIGRAALLGLFLTT), and 188 to 208 (LVIAGFNAVVALLLAVIVFIW).

Belongs to the CobS family. Mg(2+) serves as cofactor.

It localises to the cell inner membrane. It carries out the reaction alpha-ribazole + adenosylcob(III)inamide-GDP = adenosylcob(III)alamin + GMP + H(+). The catalysed reaction is alpha-ribazole 5'-phosphate + adenosylcob(III)inamide-GDP = adenosylcob(III)alamin 5'-phosphate + GMP + H(+). It participates in cofactor biosynthesis; adenosylcobalamin biosynthesis; adenosylcobalamin from cob(II)yrinate a,c-diamide: step 7/7. Functionally, joins adenosylcobinamide-GDP and alpha-ribazole to generate adenosylcobalamin (Ado-cobalamin). Also synthesizes adenosylcobalamin 5'-phosphate from adenosylcobinamide-GDP and alpha-ribazole 5'-phosphate. This chain is Adenosylcobinamide-GDP ribazoletransferase, found in Pseudomonas fluorescens (strain Pf0-1).